The following is a 274-amino-acid chain: uncharacterized protein (274 aa).

A compositionally biased stretch (basic and acidic residues) spans 1–20 (MSLEKSLDEIINERTNGFDH). Disordered stretches follow at residues 1 to 63 (MSLE…HDLD), 148 to 217 (NLKG…EDLD), and 230 to 274 (ASTV…MEAV). The segment covering 21–44 (KHSRRRGSQNRISKKSRLTYKFKR) has biased composition (basic residues). The span at 45–63 (ASKEHNSSPDDGPWQHDLD) shows a compositional bias: basic and acidic residues. The RRM domain occupies 85-161 (FGVRVENLHY…SEIQISKKSP (77 aa)). Polar residues predominate over residues 148–160 (NLKGSEIQISKKS). 2 stretches are compositionally biased toward low complexity: residues 181 to 190 (SSRSNRGFNR) and 200 to 211 (RSSSKKSSNNSI). Over residues 230 to 245 (ASTVSSHSSQDFTPSI) the composition is skewed to polar residues. Positions 263–274 (LTEEMDLQMEAV) are enriched in acidic residues.

This is an uncharacterized protein from Schizosaccharomyces pombe (strain 972 / ATCC 24843) (Fission yeast).